The following is a 68-amino-acid chain: Probable Sec-independent protein translocase protein TatE (68 aa).

Residues 1–21 (MGEISITKLLVVAALIILVFG) traverse the membrane as a helical segment. The disordered stretch occupies residues 43-68 (MNEDDDSAKKTTAEEEAPAQKLSHKE).

The protein belongs to the TatA/E family. TatE subfamily.

Its subcellular location is the cell inner membrane. Functionally, part of the twin-arginine translocation (Tat) system that transports large folded proteins containing a characteristic twin-arginine motif in their signal peptide across membranes. TatE shares overlapping functions with TatA. This is Probable Sec-independent protein translocase protein TatE from Klebsiella pneumoniae subsp. pneumoniae (strain ATCC 700721 / MGH 78578).